A 63-amino-acid polypeptide reads, in one-letter code: Alpha-conotoxin-like PuSG1.2 (63 aa).

Residues 1–21 (MRCLALLVVTLLLFTATATTG) form the signal peptide. Residues 22–43 (ASNGMNAAASGEAPDSISLAVR) constitute a propeptide that is removed on maturation. 2 disulfides stabilise this stretch: C46-C52 and C47-C60. Positions 48 to 50 (PDP) are lacks the Ser-Xaa-Pro motif that is crucial for potent interaction with nAChR.

This sequence belongs to the conotoxin A superfamily. In terms of tissue distribution, expressed by the salivary gland.

It is found in the secreted. Its function is as follows. Alpha-conopeptides-like may act on postsynaptic membranes, they bind to the nicotinic acetylcholine receptors (nAChR) and thus inhibit them. Has possibly a distinct nAChR binding mode from other alpha-conotoxins, due to a different three residue motif (lacks the Ser-Xaa-Pro motif). In Conus pulicarius (Flea-bitten cone), this protein is Alpha-conotoxin-like PuSG1.2.